The following is a 212-amino-acid chain: Redox-sensing transcriptional repressor Rex (212 aa).

The segment at residues 17–56 (LYARSLRYLLEEGVHSVSSQELGERINVTAAQIRKDLSYF) is a DNA-binding region (H-T-H motif). 91-96 (GIGLLG) serves as a coordination point for NAD(+).

The protein belongs to the transcriptional regulatory Rex family. Homodimer.

Its subcellular location is the cytoplasm. In terms of biological role, modulates transcription in response to changes in cellular NADH/NAD(+) redox state. This chain is Redox-sensing transcriptional repressor Rex, found in Chloroflexus aurantiacus (strain ATCC 29366 / DSM 635 / J-10-fl).